The chain runs to 397 residues: MDEALTNASAIGDQRQKIEQYKLILSSVLSSNDLLQAQRFIDHILSDDVPLVVSRQLLQSFAQELGRLEPETQKEIAQFTLTQIQPRVVSFEEQALVIREKLAGLYESEQEWSKAAQMLSGIDLDSGMRAVDDNFKLSKCIQIARLYLEDDDAVNAEAFINKASFLVSNSQNEVLNLQYKVCYARILDMKRKFLEAALRYYGISQIEQRQIGDEEIDENALEQALSAAVTCTILAGAGPQRSRVLATLYKDERCSKLKIYPILQKVYLERILRRPEIDAFSEELRPHQKASLPDKSTVLDRAMIEHNLLSASKLYTNIRFDELGTLLAIDPRKAEKIAANMIGQDRMRGSIDQEEAVIHFEDDVEELQQWDQQISGLCQALNDILDGMAKKGMSVPV.

Methionine 1 is subject to N-acetylmethionine. One can recognise a PCI domain in the interval 197-365 (ALRYYGISQI…AVIHFEDDVE (169 aa)).

Belongs to the CSN4 family. Component of the CSN complex, probably composed of CSN1, CSN2, CSN3, CSN4, CSN5 (CSN5A or CSN5B), CSN6 (CSN6A or CSN6B), CSN7 and CSN8. Interacts with itself. In the complex, it is located in the center and probably interacts directly with CSN1, CSN2, CSN3, CSN4, CSN5A or CSN5B, CSN6A or CSN6B, CSN7 and CSN8. Interacts with COP10. Binds to the translation initiation factors TIF3E1.

The protein localises to the cytoplasm. It is found in the nucleus. In terms of biological role, component of the COP9 signalosome complex (CSN), a complex involved in various cellular and developmental processes such as photomorphogenesis and auxin and jasmonate responses. The CSN complex is an essential regulator of the ubiquitin (Ubl) conjugation pathway by mediating the deneddylation of the cullin subunits of SCF-type E3 ligase complexes, leading to decrease the Ubl ligase activity of SCF. It is involved in repression of photomorphogenesis in darkness by regulating the activity of COP1-containing Ubl ligase complexes. The complex is also required for degradation of IAA6 by regulating the activity of the Ubl ligase SCF-TIR complex. The sequence is that of COP9 signalosome complex subunit 4 (CSN4) from Arabidopsis thaliana (Mouse-ear cress).